The following is a 124-amino-acid chain: Galanin peptides (124 aa).

The N-terminal stretch at 1–19 (MARGSVILLAWLLLVATLS) is a signal peptide. Residues 20–30 (ATLGLGMPTKE) constitute a propeptide that is removed on maturation. Thr-61 carries the post-translational modification Threonine amide. Ser-117 and Ser-118 each carry phosphoserine.

It belongs to the galanin family.

It localises to the secreted. Functionally, endocrine hormone of the central and peripheral nervous systems that binds and activates the G protein-coupled receptors GALR1, GALR2, and GALR3. This small neuropeptide may regulate diverse physiologic functions including contraction of smooth muscle of the gastrointestinal and genitourinary tract, growth hormone and insulin release and adrenal secretion. The protein is Galanin peptides (Gal) of Rattus norvegicus (Rat).